The chain runs to 418 residues: Tyrosine--tRNA ligase (418 aa).

L-tyrosine is bound at residue Tyr34. The short motif at Pro39–His48 is the 'HIGH' region element. 2 residues coordinate L-tyrosine: Tyr169 and Gln173. The 'KMSKS' region motif lies at Lys229–Ser233. ATP is bound at residue Lys232. One can recognise an S4 RNA-binding domain in the interval Leu352–Tyr418.

It belongs to the class-I aminoacyl-tRNA synthetase family. TyrS type 1 subfamily. As to quaternary structure, homodimer.

The protein localises to the cytoplasm. It carries out the reaction tRNA(Tyr) + L-tyrosine + ATP = L-tyrosyl-tRNA(Tyr) + AMP + diphosphate + H(+). Catalyzes the attachment of tyrosine to tRNA(Tyr) in a two-step reaction: tyrosine is first activated by ATP to form Tyr-AMP and then transferred to the acceptor end of tRNA(Tyr). The sequence is that of Tyrosine--tRNA ligase from Streptococcus thermophilus (strain ATCC BAA-491 / LMD-9).